The following is a 383-amino-acid chain: Xylose/arabinose import ATP-binding protein XacK (383 aa).

Residues 4–240 (LTLDDVTKVY…PNNLFVAGFI (237 aa)) enclose the ABC transporter domain. 41–48 (GPSGCGKS) contributes to the ATP binding site.

This sequence belongs to the ABC transporter superfamily. Carbohydrate uptake transporter-1 (CUT1) (TC 3.A.1.1) family. As to quaternary structure, the complex is composed of two ATP-binding proteins (XacJ and XacK), two transmembrane proteins (XacH and XacI) and a solute-binding protein (XacG).

Its subcellular location is the cell membrane. It carries out the reaction D-xylose(out) + ATP + H2O = D-xylose(in) + ADP + phosphate + H(+). It catalyses the reaction L-arabinose(out) + ATP + H2O = L-arabinose(in) + ADP + phosphate + H(+). Functionally, part of the ABC transporter complex XacGHIJK involved in the uptake of xylose and arabinose. Responsible for energy coupling to the transport system. In Haloferax volcanii (strain ATCC 29605 / DSM 3757 / JCM 8879 / NBRC 14742 / NCIMB 2012 / VKM B-1768 / DS2) (Halobacterium volcanii), this protein is Xylose/arabinose import ATP-binding protein XacK.